A 504-amino-acid polypeptide reads, in one-letter code: Putative ribose/galactose/methyl galactoside import ATP-binding protein (504 aa).

2 consecutive ABC transporter domains span residues 5–242 (ISVK…GRNL) and 252–497 (TSAN…TRRE). 37–44 (GENGAGKS) is an ATP binding site.

The protein belongs to the ABC transporter superfamily. Carbohydrate importer 2 (CUT2) (TC 3.A.1.2) family.

The protein localises to the cell inner membrane. The enzyme catalyses D-ribose(out) + ATP + H2O = D-ribose(in) + ADP + phosphate + H(+). It carries out the reaction D-galactose(out) + ATP + H2O = D-galactose(in) + ADP + phosphate + H(+). Its function is as follows. Part of an ABC transporter complex involved in carbohydrate import. Could be involved in ribose, galactose and/or methyl galactoside import. Responsible for energy coupling to the transport system. This is Putative ribose/galactose/methyl galactoside import ATP-binding protein from Albidiferax ferrireducens (strain ATCC BAA-621 / DSM 15236 / T118) (Rhodoferax ferrireducens).